Consider the following 351-residue polypeptide: N-acetyl-gamma-glutamyl-phosphate reductase (351 aa).

C154 is a catalytic residue.

This sequence belongs to the NAGSA dehydrogenase family. Type 1 subfamily.

The protein localises to the cytoplasm. The catalysed reaction is N-acetyl-L-glutamate 5-semialdehyde + phosphate + NADP(+) = N-acetyl-L-glutamyl 5-phosphate + NADPH + H(+). The protein operates within amino-acid biosynthesis; L-arginine biosynthesis; N(2)-acetyl-L-ornithine from L-glutamate: step 3/4. Its function is as follows. Catalyzes the NADPH-dependent reduction of N-acetyl-5-glutamyl phosphate to yield N-acetyl-L-glutamate 5-semialdehyde. The polypeptide is N-acetyl-gamma-glutamyl-phosphate reductase (Prochlorococcus marinus subsp. pastoris (strain CCMP1986 / NIES-2087 / MED4)).